We begin with the raw amino-acid sequence, 374 residues long: F-box/LRR-repeat protein 8 (374 aa).

The region spanning 2 to 48 is the F-box domain; sequence AEPGEQLPEEVLALIFRHLPLPDRAAAARVCRAWAAAATCSAVWHDT.

Directly interacts with SKP1 and CUL1.

Its function is as follows. Substrate-recognition component of the SCF (SKP1-CUL1-F-box protein)-type E3 ubiquitin ligase complex. The protein is F-box/LRR-repeat protein 8 (FBXL8) of Bos taurus (Bovine).